The primary structure comprises 1822 residues: CDK5 regulatory subunit-associated protein 2 (1822 aa).

The tract at residues 50–93 (KVSPTRARNMKDFENQITELKKENFNLKLRIYFLEERIQQEFAG) is CM1 motif; interacts with the gTuRC. The segment at 57 to 195 (RNMKDFENQI…TEKALRLSLE (139 aa)) is interaction with NCKAP5L. Phosphoserine is present on residues serine 485 and serine 544. The segment at 1022–1046 (FQDNPGEQEGPETTQSAGRDKDMDS) is disordered. Residue threonine 1195 is modified to Phosphothreonine. Residues 1201 to 1822 (GKMLESLKQQ…GASSPSRPGS (622 aa)) form an interaction with PCNT and AKAP9 region. Phosphoserine occurs at positions 1243 and 1245. Residues 1350–1391 (YHHLLPESPEPSASHALSDDEMSEKSFLSRDPKPDSDTEKYP) form a disordered region. Residues 1372–1389 (SEKSFLSRDPKPDSDTEK) are compositionally biased toward basic and acidic residues. Residues serine 1497, serine 1592, and serine 1595 each carry the phosphoserine modification. The interval 1655–1697 (HMLGLIEDYDALYKQISWGQTLLAKMDVQTQEALSPTSHKLGP) is interaction with CDK5R1. Positions 1655 to 1822 (HMLGLIEDYD…GASSPSRPGS (168 aa)) are required for centrosomal attachment, Golgi targeting and CALM1 interaction. The interaction with PCNT stretch occupies residues 1688-1822 (LSPTSHKLGP…GASSPSRPGS (135 aa)). A required for centrosomal attachment, Golgi localization and CALM1 interaction region spans residues 1790 to 1799 (VITHQVLRKA). A Phosphoserine modification is found at serine 1822.

In terms of assembly, homodimer. Interacts with CDK5R1 (p35 form). CDK5RAP1, CDK5RAP2 and CDK5RAP3 show competitive binding to CDK5R1. May form a complex with CDK5R1 and CDK5. Interacts with pericentrin/PCNT; the interaction is leading to centrosomal and Golgi localization of CDK5RAP2 and PCNT. Interacts with AKAP9; the interaction targets CDK5RAP2 and AKAP9 to Golgi apparatus. Interacts with TUBG1; the interaction is leading to the centrosomal localization of CDK5RAP2 and TUBG1. Interacts with TUBGCP3. Interacts with CALM1. Interacts with CDC20. Interacts with CEP68; degradation of CEP68 in early mitosis leads to removal of CDK5RAP2 from the centrosome which promotes centriole disengagement and subsequent centriole separation. Interacts with NCKAP5L. Interacts with LGALS3BP; this interaction may connect the pericentrosomal complex to the gamma-tubulin ring complex (gTuRC) to promote microtubule assembly and acetylation. Contrary to human, chimpanzee, bovine and dog orthologous proteins, does not interact with EB1/MAPRE1, possibly due to a divergence at the level of the critical residue 939, which is a proline in MAPRE1-binding orthologs and a leucine in mouse and rat. Interacts with CCDC66. Associates (via CM1 motif) with TUBGCP2 of the gTuRC; the interaction plays a role in gTuRC activation. In terms of processing, phosphorylated in vitro by CDK5. As to expression, expressed in testis, thymus, heart and brain.

Its subcellular location is the cytoplasm. It is found in the cytoskeleton. It localises to the microtubule organizing center. The protein resides in the centrosome. The protein localises to the golgi apparatus. Its function is as follows. Potential regulator of CDK5 activity via its interaction with CDK5R1. Negative regulator of centriole disengagement (licensing) which maintains centriole engagement and cohesion. Involved in regulation of mitotic spindle orientation. Plays a role in the spindle checkpoint activation by acting as a transcriptional regulator of both BUBR1 and MAD2 promoter. Together with EB1/MAPRE1, may promote microtubule polymerization, bundle formation, growth and dynamics at the plus ends. Regulates centrosomal maturation by recruitment of the gamma-tubulin ring complex (gTuRC) onto centrosomes. Required for the recruitment of AKAP9 to centrosomes. Plays a role in neurogenesis. Contrary to higher mammalian orthologs, including human, chimpanzee, bovine and dog, does not interact with EB1/MAPRE1, therefore its function in the regulation of microtubule dynamics is unclear. The chain is CDK5 regulatory subunit-associated protein 2 (Cdk5rap2) from Mus musculus (Mouse).